The primary structure comprises 210 residues: Small ribosomal subunit protein uS7 (210 aa).

It belongs to the universal ribosomal protein uS7 family.

The sequence is that of Small ribosomal subunit protein uS7 (RPS5) from Podocoryna carnea (Hydrozoan).